The primary structure comprises 194 residues: Peptidyl-tRNA hydrolase (194 aa).

Tyr16 is a binding site for tRNA. Catalysis depends on His21, which acts as the Proton acceptor. TRNA-binding residues include Phe67, Asn69, and Asn115.

Belongs to the PTH family. As to quaternary structure, monomer.

It is found in the cytoplasm. The catalysed reaction is an N-acyl-L-alpha-aminoacyl-tRNA + H2O = an N-acyl-L-amino acid + a tRNA + H(+). Functionally, hydrolyzes ribosome-free peptidyl-tRNAs (with 1 or more amino acids incorporated), which drop off the ribosome during protein synthesis, or as a result of ribosome stalling. In terms of biological role, catalyzes the release of premature peptidyl moieties from peptidyl-tRNA molecules trapped in stalled 50S ribosomal subunits, and thus maintains levels of free tRNAs and 50S ribosomes. The protein is Peptidyl-tRNA hydrolase of Sodalis glossinidius (strain morsitans).